Here is a 376-residue protein sequence, read N- to C-terminus: 23S rRNA (uracil(747)-C(5))-methyltransferase RlmC (376 aa).

4 residues coordinate [4Fe-4S] cluster: cysteine 3, cysteine 11, cysteine 14, and cysteine 87. 4 residues coordinate S-adenosyl-L-methionine: glutamine 212, phenylalanine 241, glutamate 262, and asparagine 307. The Nucleophile role is filled by cysteine 334.

It belongs to the class I-like SAM-binding methyltransferase superfamily. RNA M5U methyltransferase family. RlmC subfamily.

The catalysed reaction is uridine(747) in 23S rRNA + S-adenosyl-L-methionine = 5-methyluridine(747) in 23S rRNA + S-adenosyl-L-homocysteine + H(+). In terms of biological role, catalyzes the formation of 5-methyl-uridine at position 747 (m5U747) in 23S rRNA. This chain is 23S rRNA (uracil(747)-C(5))-methyltransferase RlmC, found in Salmonella newport (strain SL254).